Reading from the N-terminus, the 329-residue chain is Biotin--protein ligase 2 (329 aa).

Positions 67-251 constitute a BPL/LPL catalytic domain; that stretch reads ISTHRFGRFL…KFENFFDLFM (185 aa). Biotin-binding positions include 84 to 85, Gln-107, 111 to 113, and Lys-182; these read ST and RGR.

Belongs to the biotin--protein ligase family. Highly expressed in seeds. Expressed in roots, leaves, stems, flowers and siliques.

It is found in the cytoplasm. Functionally, seems to have no or limited implication in biotin-dependent carboxylase biotinylation in planta. In Arabidopsis thaliana (Mouse-ear cress), this protein is Biotin--protein ligase 2 (HCS2).